Here is a 46-residue protein sequence, read N- to C-terminus: uncharacterized protein (46 aa).

This sequence to equivalent protein in phage 82.

This is an uncharacterized protein from Escherichia coli (strain K12).